Here is a 595-residue protein sequence, read N- to C-terminus: Actin-histidine N-methyltransferase (595 aa).

Residues 1-22 are disordered; it reads MGKKSRVKTQKSGTGATATVSP. Residues 10–20 show a composition bias toward polar residues; it reads QKSGTGATATV. Residues R75, 104–106, R254, 275–279, and 325–327 contribute to the S-adenosyl-L-methionine site; these read EGF, DMCNH, and SGF. The SET domain maps to 94–314; that stretch reads EGFEMVNFKE…AGEQIYIFYG (221 aa). At S513 the chain carries Phosphoserine. The disordered stretch occupies residues 552–595; sequence LVNGENCIPNGTRSENEDLNQEENKRAVEDAKGSSSDSTDAVKK. The segment covering 573-583 has biased composition (basic and acidic residues); sequence EENKRAVEDAK. Polar residues predominate over residues 584–595; sequence GSSSDSTDAVKK.

It belongs to the class V-like SAM-binding methyltransferase superfamily. SETD3 actin-histidine methyltransferase family. In terms of assembly, interacts with MYOD1. Phosphorylated by GSK3B, which is required for recognition by the SCF(FBXW7) complex and subsequent degradation. In terms of processing, ubiquitinated by the SCF(FBXW7) complex following phosphorylation by GSK3B, leading to its degradation by the proteasome.

Its subcellular location is the cytoplasm. It localises to the nucleus. The catalysed reaction is L-histidyl-[protein] + S-adenosyl-L-methionine = N(tele)-methyl-L-histidyl-[protein] + S-adenosyl-L-homocysteine + H(+). Its function is as follows. Protein-histidine N-methyltransferase that specifically mediates 3-methylhistidine (tele-methylhistidine) methylation of actin at 'His-73'. Histidine methylation of actin is required for smooth muscle contraction of the laboring uterus during delivery. Does not have protein-lysine N-methyltransferase activity and probably only catalyzes histidine methylation of actin. This is Actin-histidine N-methyltransferase from Otolemur garnettii (Small-eared galago).